A 529-amino-acid polypeptide reads, in one-letter code: MLKREDLIAPVQYNLVNEMEKFSAAGQKTALLWEDESGKQESWSYEKLMEETNKIGAALADLGFKKGDKLIVMVPRVLEAYAVYLAILKSGMVVIPCSEMLRAKDLEYRIEHAEVKGAIVYSEFIGAFRDVSTADKLITLSIGENDAGWKNLLSIEADGSQFKTADTTRDDMAFLSYTSGTTGQPKGVVHTHGWAFAHLKTSAGAWLDISEKDIVWATAAPGWQKWVWSPFLAVLGSGATGFVYHGRFKAEKYLELLNRYKINVFCCTPTEYRLMAKVEGLKRFDLSALHSAVSAGEPLNREVIDVFQKHFGIKVRDGYGQTESTLLVGVLKDTPIKPGSMGKPTPGNQVEIINEDGEICKPGEVGDIAVHLSTPALFKEYFKDPERMKTQIRGDYFLTGDRARKDEEGYFWFESRNDDIIISSGYTIGPFEVEDALVKHPEVKECAVVASPDEIRGSIVKAYVVLQNHEKRSDELVKMLQNHVKTITAPYKYPREIEFVESLPKTASAKIRRVELRKREEQLKANKKA.

Residues 178 to 186 (TSGTTGQPK), aspartate 401, arginine 416, and lysine 510 contribute to the ATP site.

Belongs to the ATP-dependent AMP-binding enzyme family.

This is an uncharacterized protein from Bacillus subtilis (strain 168).